Consider the following 321-residue polypeptide: 6-phosphogluconolactonase-like protein 1 (321 aa).

The interval 36 to 85 (GKVSRSTQMSGTSLNGNGNTESKTMERVNSVRSNASSRGGSEDGATKKLK) is disordered. The segment covering 39 to 57 (SRSTQMSGTSLNGNGNTES) has biased composition (polar residues). The span at 63–74 (VNSVRSNASSRG) shows a compositional bias: low complexity. Residues Ser-65 and Ser-68 each carry the phosphoserine modification. The span at 75-85 (GSEDGATKKLK) shows a compositional bias: basic and acidic residues. A Phosphothreonine modification is found at Thr-320.

This sequence belongs to the glucosamine/galactosamine-6-phosphate isomerase family. 6-phosphogluconolactonase subfamily.

It is found in the cytoplasm. The protein resides in the nucleus. Its function is as follows. May be involved in regulation of tRNA subcellular distribution. The polypeptide is 6-phosphogluconolactonase-like protein 1 (SOL1) (Saccharomyces cerevisiae (strain ATCC 204508 / S288c) (Baker's yeast)).